Here is a 335-residue protein sequence, read N- to C-terminus: tRNA pseudouridine synthase D (335 aa).

Residue aspartate 77 is the Nucleophile of the active site. One can recognise a TRUD domain in the interval 152-308 (GFPNYFTEQR…AQNLNWQFEP (157 aa)).

Belongs to the pseudouridine synthase TruD family.

The enzyme catalyses uridine(13) in tRNA = pseudouridine(13) in tRNA. Responsible for synthesis of pseudouridine from uracil-13 in transfer RNAs. In Actinobacillus succinogenes (strain ATCC 55618 / DSM 22257 / CCUG 43843 / 130Z), this protein is tRNA pseudouridine synthase D.